The sequence spans 105 residues: MAAKIRRNDEVIVLVGKDKGKKGKVTKVLETGKVIVEGINLVKKHQKPVPALGQQGGIVEKEAAIDASNIAIFNDATGKADRIGFRFEEGKKVRFFKSNGETISN.

It belongs to the universal ribosomal protein uL24 family. As to quaternary structure, part of the 50S ribosomal subunit.

In terms of biological role, one of two assembly initiator proteins, it binds directly to the 5'-end of the 23S rRNA, where it nucleates assembly of the 50S subunit. Its function is as follows. One of the proteins that surrounds the polypeptide exit tunnel on the outside of the subunit. The sequence is that of Large ribosomal subunit protein uL24 from Aliivibrio salmonicida (strain LFI1238) (Vibrio salmonicida (strain LFI1238)).